Consider the following 202-residue polypeptide: Lymphotoxin-alpha (202 aa).

Positions 1-33 (MTPLGRLHLLRVLSTPPVFLLGLLLALPLGAQG) are cleaved as a signal peptide. Residues 60–202 (PAAHLVGYPS…STVFFGAFAL (143 aa)) enclose the THD domain. The N-linked (GlcNAc...) asparagine glycan is linked to Asn-93.

Belongs to the tumor necrosis factor family. Homotrimer, and heterotrimer of either two LTB and one LTA subunits or (less prevalent) two LTA and one LTB subunits. Interacts with TNFRSF14.

The protein resides in the secreted. Its subcellular location is the membrane. Its function is as follows. Cytokine that in its homotrimeric form binds to TNFRSF1A/TNFR1, TNFRSF1B/TNFBR and TNFRSF14/HVEM. In its heterotrimeric form with LTB binds to TNFRSF3/LTBR. Lymphotoxin is produced by lymphocytes and is cytotoxic for a wide range of tumor cells in vitro and in vivo. This is Lymphotoxin-alpha (Lta) from Rattus norvegicus (Rat).